Consider the following 101-residue polypeptide: Small ribosomal subunit protein uS14 (101 aa).

It belongs to the universal ribosomal protein uS14 family. In terms of assembly, part of the 30S ribosomal subunit. Contacts proteins S3 and S10.

In terms of biological role, binds 16S rRNA, required for the assembly of 30S particles and may also be responsible for determining the conformation of the 16S rRNA at the A site. In Enterobacter sp. (strain 638), this protein is Small ribosomal subunit protein uS14.